The primary structure comprises 969 residues: Isoleucine--tRNA ligase (969 aa).

The short motif at 68-78 (PYANGNLHMGH) is the 'HIGH' region element. Glutamate 584 provides a ligand contact to L-isoleucyl-5'-AMP. A 'KMSKS' region motif is present at residues 625 to 629 (KMSKS). Residue lysine 628 coordinates ATP. 4 residues coordinate Zn(2+): cysteine 938, cysteine 941, cysteine 958, and cysteine 961.

The protein belongs to the class-I aminoacyl-tRNA synthetase family. IleS type 1 subfamily. Monomer. Zn(2+) serves as cofactor.

It localises to the cytoplasm. The enzyme catalyses tRNA(Ile) + L-isoleucine + ATP = L-isoleucyl-tRNA(Ile) + AMP + diphosphate. Catalyzes the attachment of isoleucine to tRNA(Ile). As IleRS can inadvertently accommodate and process structurally similar amino acids such as valine, to avoid such errors it has two additional distinct tRNA(Ile)-dependent editing activities. One activity is designated as 'pretransfer' editing and involves the hydrolysis of activated Val-AMP. The other activity is designated 'posttransfer' editing and involves deacylation of mischarged Val-tRNA(Ile). The chain is Isoleucine--tRNA ligase from Prochlorococcus marinus (strain SARG / CCMP1375 / SS120).